Reading from the N-terminus, the 801-residue chain is Probable methionine--tRNA ligase (801 aa).

The 'HIGH' region motif lies at P25–N35. A 'KMSKS' region motif is present at residues K347–S351. An ATP-binding site is contributed by K350. A disordered region spans residues D606–N633. The tRNA-binding domain maps to T639–T742.

This sequence belongs to the class-I aminoacyl-tRNA synthetase family.

Its subcellular location is the cytoplasm. It catalyses the reaction tRNA(Met) + L-methionine + ATP = L-methionyl-tRNA(Met) + AMP + diphosphate. This Oryza sativa subsp. japonica (Rice) protein is Probable methionine--tRNA ligase.